A 199-amino-acid polypeptide reads, in one-letter code: Probable nicotinate-nucleotide adenylyltransferase (199 aa).

It belongs to the NadD family.

The catalysed reaction is nicotinate beta-D-ribonucleotide + ATP + H(+) = deamido-NAD(+) + diphosphate. It participates in cofactor biosynthesis; NAD(+) biosynthesis; deamido-NAD(+) from nicotinate D-ribonucleotide: step 1/1. Its function is as follows. Catalyzes the reversible adenylation of nicotinate mononucleotide (NaMN) to nicotinic acid adenine dinucleotide (NaAD). This is Probable nicotinate-nucleotide adenylyltransferase from Roseiflexus sp. (strain RS-1).